Reading from the N-terminus, the 299-residue chain is GTP cyclohydrolase FolE2 (299 aa).

The disordered stretch occupies residues 1–25 (MKTKQWPSKTERHKRFGSVPPVAGK).

Belongs to the GTP cyclohydrolase IV family.

The enzyme catalyses GTP + H2O = 7,8-dihydroneopterin 3'-triphosphate + formate + H(+). The protein operates within cofactor biosynthesis; 7,8-dihydroneopterin triphosphate biosynthesis; 7,8-dihydroneopterin triphosphate from GTP: step 1/1. Its function is as follows. Converts GTP to 7,8-dihydroneopterin triphosphate. The chain is GTP cyclohydrolase FolE2 from Halalkalibacterium halodurans (strain ATCC BAA-125 / DSM 18197 / FERM 7344 / JCM 9153 / C-125) (Bacillus halodurans).